The primary structure comprises 339 residues: Ketol-acid reductoisomerase (NADP(+)) (339 aa).

Residues 1-182 (MRVYYDRDAD…GGGRAGIIET (182 aa)) enclose the KARI N-terminal Rossmann domain. NADP(+)-binding positions include 24 to 27 (YGSQ), R48, S51, T53, and 83 to 86 (DELQ). The active site involves H108. Residue G134 coordinates NADP(+). Residues 183–328 (TFKEECETDL…AKLRGMMPWI (146 aa)) enclose the KARI C-terminal knotted domain. Mg(2+)-binding residues include D191, E195, E227, and E231. S252 contacts substrate.

Belongs to the ketol-acid reductoisomerase family. It depends on Mg(2+) as a cofactor.

It catalyses the reaction (2R)-2,3-dihydroxy-3-methylbutanoate + NADP(+) = (2S)-2-acetolactate + NADPH + H(+). The catalysed reaction is (2R,3R)-2,3-dihydroxy-3-methylpentanoate + NADP(+) = (S)-2-ethyl-2-hydroxy-3-oxobutanoate + NADPH + H(+). It functions in the pathway amino-acid biosynthesis; L-isoleucine biosynthesis; L-isoleucine from 2-oxobutanoate: step 2/4. The protein operates within amino-acid biosynthesis; L-valine biosynthesis; L-valine from pyruvate: step 2/4. Its function is as follows. Involved in the biosynthesis of branched-chain amino acids (BCAA). Catalyzes an alkyl-migration followed by a ketol-acid reduction of (S)-2-acetolactate (S2AL) to yield (R)-2,3-dihydroxy-isovalerate. In the isomerase reaction, S2AL is rearranged via a Mg-dependent methyl migration to produce 3-hydroxy-3-methyl-2-ketobutyrate (HMKB). In the reductase reaction, this 2-ketoacid undergoes a metal-dependent reduction by NADPH to yield (R)-2,3-dihydroxy-isovalerate. In Methylobacterium radiotolerans (strain ATCC 27329 / DSM 1819 / JCM 2831 / NBRC 15690 / NCIMB 10815 / 0-1), this protein is Ketol-acid reductoisomerase (NADP(+)).